We begin with the raw amino-acid sequence, 93 residues long: Class II hydrophobin 1 (93 aa).

The N-terminal stretch at 1-16 is a signal peptide; that stretch reads MKFFAVAALFVASAMA. Intrachain disulfides connect Cys-24–Cys-74, Cys-35–Cys-65, Cys-36–Cys-48, and Cys-75–Cys-86.

It belongs to the cerato-ulmin hydrophobin family. Interacts with maize ubiquilin 1-like (UBL) protein. Homotetramer. Further self-assembles to form highly ordered films at water-air interfaces through intermolecular interactions.

It localises to the cell membrane. Functionally, aerial growth, conidiation, and dispersal of filamentous fungi in the environment rely upon a capability of their secreting small amphipathic proteins called hydrophobins (HPBs) with low sequence identity. Class I can self-assemble into an outermost layer of rodlet bundles on aerial cell surfaces, conferring cellular hydrophobicity that supports fungal growth, development and dispersal; whereas Class II form highly ordered films at water-air interfaces through intermolecular interactions but contribute nothing to the rodlet structure. Hyd1 is a class II hydrophobin that acts as an elicitor of induced systemic resistance (ISR) in plants. During interaction with the plant, binds with the maize target protein UBL in order to recruit more UBL proteins in maize roots to elicit plant defense responses, including cell death as well as brassinosteroid, jasmonate (JA) and ethylene (ET) signaling. The protein is Class II hydrophobin 1 of Trichoderma harzianum (Hypocrea lixii).